Here is a 427-residue protein sequence, read N- to C-terminus: MDNFQGDLTDVVRGIGSGHVSPSPGPPEGPSPSSMSPPPTSDLHVEFPSAATSASCLANPFGDPFVSMKDPLIHLPASYISGAGDNKSNKSFAIFPKIFEDDHIKSQCSVFPRIKISQSNNIHDASTCNSPAITVSSAAVAASPWGMINVNTTNSPRNCLLVDNNNNTSSCSQVQISSSPRNLGIKRRKSQAKKVVCIPAPAAMNSRSSGEVVPSDLWAWRKYGQKPIKGSPYPRGYYRCSSSKGCSARKQVERSRTDPNMLVITYTSEHNHPWPTQRNALAGSTRSSSSSSLNPSSKSSTAAATTSPSSRVFQNNSSKDEPNNSNLPSSSTHPPFDAAAIKEENVEERQEKMEFDYNDVENTYRPELLQEFQHQPEDFFADLDELEGDSLTMLLSHSSGGGNMENKTTIPDVFSDFFDDDESSRSL.

2 disordered regions span residues 1 to 45 (MDNF…DLHV) and 266 to 336 (YTSE…HPPF). Residues 23 to 40 (SPGPPEGPSPSSMSPPPT) are compositionally biased toward pro residues. Positions 209 to 275 (SGEVVPSDLW…YTSEHNHPWP (67 aa)) form a DNA-binding region, WRKY. Residues 284 to 310 (STRSSSSSSLNPSSKSSTAAATTSPSS) show a composition bias toward low complexity. Over residues 311 to 333 (RVFQNNSSKDEPNNSNLPSSSTH) the composition is skewed to polar residues.

The protein belongs to the WRKY group II-e family.

It localises to the nucleus. Functionally, transcription factor. Interacts specifically with the W box (5'-(T)TGAC[CT]-3'), a frequently occurring elicitor-responsive cis-acting element. In Arabidopsis thaliana (Mouse-ear cress), this protein is Probable WRKY transcription factor 35 (WRKY35).